A 317-amino-acid polypeptide reads, in one-letter code: Tetraspanin-15 (317 aa).

Residues 1–43 (MADNAQVVPVEEPAATATATATATATTEPEAKSSDQMESQSDN) are disordered. Over 1-60 (MADNAQVVPVEEPAATATATATATATTEPEAKSSDQMESQSDNKPPMGTLMALVNILAAG) the chain is Cytoplasmic. Over residues 7–28 (VVPVEEPAATATATATATATTE) the composition is skewed to low complexity. The helical transmembrane segment at 61 to 81 (VLPIFTFVLSLTLLGYAVWLL) threads the bilayer. Topologically, residues 82–96 (YMRSYDCEDILGLPR) are extracellular. Residues 97-117 (VQTLASVGLLAVFVVSNAALF) form a helical membrane-spanning segment. Over 118 to 126 (LRRKFPMPA) the chain is Cytoplasmic. Residues 127-147 (LVVMVVVLLLMLFIGLAYAGV) form a helical membrane-spanning segment. Residues 148–287 (NEMQSRRFPA…IRSVRRKWWQ (140 aa)) are Extracellular-facing. An N-linked (GlcNAc...) asparagine glycan is attached at N224. Residues 288–308 (LGIFLIVISILLLMSHLLIFL) form a helical membrane-spanning segment. The Cytoplasmic portion of the chain corresponds to 309–317 (ATFWERFKG).

The protein belongs to the tetraspanin (TM4SF) family.

It is found in the membrane. In terms of biological role, may be involved in the regulation of cell differentiation. This Arabidopsis thaliana (Mouse-ear cress) protein is Tetraspanin-15 (TET15).